The chain runs to 235 residues: Phosphoribosylaminoimidazole-succinocarboxamide synthase (235 aa).

It belongs to the SAICAR synthetase family.

It catalyses the reaction 5-amino-1-(5-phospho-D-ribosyl)imidazole-4-carboxylate + L-aspartate + ATP = (2S)-2-[5-amino-1-(5-phospho-beta-D-ribosyl)imidazole-4-carboxamido]succinate + ADP + phosphate + 2 H(+). The protein operates within purine metabolism; IMP biosynthesis via de novo pathway; 5-amino-1-(5-phospho-D-ribosyl)imidazole-4-carboxamide from 5-amino-1-(5-phospho-D-ribosyl)imidazole-4-carboxylate: step 1/2. The polypeptide is Phosphoribosylaminoimidazole-succinocarboxamide synthase (Thermococcus kodakarensis (strain ATCC BAA-918 / JCM 12380 / KOD1) (Pyrococcus kodakaraensis (strain KOD1))).